Here is a 199-residue protein sequence, read N- to C-terminus: 3-isopropylmalate dehydratase small subunit (199 aa).

Belongs to the LeuD family. LeuD type 1 subfamily. Heterodimer of LeuC and LeuD.

It carries out the reaction (2R,3S)-3-isopropylmalate = (2S)-2-isopropylmalate. The protein operates within amino-acid biosynthesis; L-leucine biosynthesis; L-leucine from 3-methyl-2-oxobutanoate: step 2/4. Functionally, catalyzes the isomerization between 2-isopropylmalate and 3-isopropylmalate, via the formation of 2-isopropylmaleate. The polypeptide is 3-isopropylmalate dehydratase small subunit (Pseudoalteromonas translucida (strain TAC 125)).